A 64-amino-acid chain; its full sequence is MVFVKVRDAEHLEEALKRFKRECEKNGILKEIKRRETYMPPSVKRKIKSQEAQRRMRRTKRKRF.

Residues 40 to 64 (PPSVKRKIKSQEAQRRMRRTKRKRF) are disordered. Residues 55–64 (RMRRTKRKRF) show a composition bias toward basic residues.

The protein belongs to the bacterial ribosomal protein bS21 family.

The polypeptide is Small ribosomal subunit protein bS21 (Elusimicrobium minutum (strain Pei191)).